Consider the following 126-residue polypeptide: L-alanine exporter AlaE (126 aa).

The chain crosses the membrane as a helical span at residues 23–43 (FALVVYCFFTGMAIEILLSGM).

The protein belongs to the AlaE exporter family.

The protein localises to the cell inner membrane. Exports L-alanine. In Sodalis glossinidius (strain morsitans), this protein is L-alanine exporter AlaE.